A 266-amino-acid polypeptide reads, in one-letter code: Interleukin-33 (266 aa).

Residues 1–67 form a homeodomain-like HTH domain region; the sequence is MRPRMKYSNS…ETSYFRKEPT (67 aa). Positions 1-101 are excised as a propeptide; sequence MRPRMKYSNS…RSLLGSIQAF (101 aa). The segment at 66 to 108 is interaction with RELA; sequence PTKRYSLKSGTKHEENFSAYPRDSRKRSLLGSIQAFAASVDTL.

Belongs to the IL-1 family. Highly divergent. As to quaternary structure, (Microbial infection) Interacts (in reduced form) with H.polygyrus ARI; the interaction abolishes the interaction with its primary receptor IL1RL1. In terms of assembly, forms a 1:1:1 heterotrimeric complex with its primary high-affinity receptor IL1RL1 and the coreceptor IL1RAP. Interacts with cargo receptor TMED10; the interaction mediates the translocation from the cytoplasm into the ERGIC (endoplasmic reticulum-Golgi intermediate compartment) and thereby secretion. The full-length protein can be released from cells and is able to signal via the IL1RL1/ST2 receptor. However, proteolytic processing by CELA1, CSTG/cathepsin G and ELANE/neutrophil elastase produces C-terminal peptides that are more active than the unprocessed full-length protein. May also be proteolytically processed by calpains. Proteolytic cleavage mediated by apoptotic caspases including CASP3 and CASP7 results in IL33 inactivation. In vitro proteolytic cleavage by CASP1 was reported but could not be confirmed in vivo suggesting that IL33 is probably not a direct substrate for that caspase.

It is found in the nucleus. It localises to the chromosome. The protein localises to the cytoplasm. Its subcellular location is the cytoplasmic vesicle. The protein resides in the secretory vesicle. It is found in the secreted. Its function is as follows. Cytokine that binds to and signals through the IL1RL1/ST2 receptor which in turn activates NF-kappa-B and MAPK signaling pathways in target cells. Involved in the maturation of Th2 cells inducing the secretion of T-helper type 2-associated cytokines. Also involved in activation of mast cells, basophils, eosinophils and natural killer cells. Acts as an enhancer of polarization of alternatively activated macrophages. Acts as a chemoattractant for Th2 cells, and may function as an 'alarmin', that amplifies immune responses during tissue injury. Induces rapid UCP2-dependent mitochondrial rewiring that attenuates the generation of reactive oxygen species and preserves the integrity of Krebs cycle required for persistent production of itaconate and subsequent GATA3-dependent differentiation of inflammation-resolving alternatively activated macrophages. Functionally, in quiescent endothelia the uncleaved form is constitutively and abundantly expressed, and acts as a chromatin-associated nuclear factor with transcriptional repressor properties, it may sequester nuclear NF-kappaB/RELA, lowering expression of its targets. This form is rapidely lost upon angiogenic or pro-inflammatory activation. This is Interleukin-33 from Mus musculus (Mouse).